We begin with the raw amino-acid sequence, 477 residues long: Methylenetetrahydrofolate--tRNA-(uracil-5-)-methyltransferase TrmFO (477 aa).

An FAD-binding site is contributed by 15-20 (GAGLAG).

The protein belongs to the MnmG family. TrmFO subfamily. Requires FAD as cofactor.

It localises to the cytoplasm. The enzyme catalyses uridine(54) in tRNA + (6R)-5,10-methylene-5,6,7,8-tetrahydrofolate + NADH + H(+) = 5-methyluridine(54) in tRNA + (6S)-5,6,7,8-tetrahydrofolate + NAD(+). The catalysed reaction is uridine(54) in tRNA + (6R)-5,10-methylene-5,6,7,8-tetrahydrofolate + NADPH + H(+) = 5-methyluridine(54) in tRNA + (6S)-5,6,7,8-tetrahydrofolate + NADP(+). Functionally, catalyzes the folate-dependent formation of 5-methyl-uridine at position 54 (M-5-U54) in all tRNAs. The polypeptide is Methylenetetrahydrofolate--tRNA-(uracil-5-)-methyltransferase TrmFO (Nitrobacter winogradskyi (strain ATCC 25391 / DSM 10237 / CIP 104748 / NCIMB 11846 / Nb-255)).